The primary structure comprises 95 residues: Phospholipase A2 inhibitor gammaCdcPLI (95 aa).

4 cysteine pairs are disulfide-bonded: Cys-2-Cys-26, Cys-5-Cys-12, Cys-19-Cys-30, and Cys-61-Cys-77.

Forms dimers or higher order oligomers in a temperature-dependent manner in vitro. As to expression, expressed by the liver.

The protein resides in the secreted. Inhibits the enzymatic activity of basic and acidic PLA2 from B.jararacussu and B.pauloensis, respectively, in a dose-dependent manner. Also inhibits myotoxicity and cytotoxicity of BnSp-7 of B.pauloensis. This is Phospholipase A2 inhibitor gammaCdcPLI from Crotalus durissus collilineatus (Brazilian rattlesnake).